Consider the following 576-residue polypeptide: Capsid protein (576 aa).

Residues 489 to 576 are disordered; the sequence is GYREPKPKPG…GLLALLKEKK (88 aa). Residues 496-509 show a composition bias toward pro residues; the sequence is KPGPPETLIPPGAP. Residues 520–537 show a composition bias toward acidic residues; that stretch reads TESDDFDTGDSEEEEEDH. Basic and acidic residues predominate over residues 538 to 551; it reads QDPRWVRESLDKLT. Residues 562–576 show a composition bias toward low complexity; sequence QQLGKGLLALLKEKK.

Belongs to the anelloviridae capsid protein family.

Its subcellular location is the virion. Self-assembles to form an icosahedral capsid with a T=1 symmetry, about 30 nm in diameter, and consisting of 60 capsid proteins. The capsid encapsulates the genomic DNA. Capsid protein is involved in attachment and entry into the host cell. This Torque teno canis virus (isolate Cf-TTV10) protein is Capsid protein.